The primary structure comprises 194 residues: MISRLTGKLVEKNPPQIVIDVNGVGYEADVSMQTFYNLPPVGESVQLFTQLIIREDAHLLFGFATAEERKTFRQLIKVGGIGAKTALGILSAMTADELARAVAEEDVKRLSSAPGIGKKTAERMVLELRGKLVAHTVTDGLFAAAPAADETEDIVSTLLALGYSEREAKAAVKGVPEGTDVGEGVRLALKNLLK.

Residues 1–64 (MISRLTGKLV…EDAHLLFGFA (64 aa)) form a domain I region. A domain II region spans residues 65–143 (TAEERKTFRQ…AHTVTDGLFA (79 aa)). Positions 144–147 (AAPA) are flexible linker. A domain III region spans residues 147-194 (AADETEDIVSTLLALGYSEREAKAAVKGVPEGTDVGEGVRLALKNLLK).

The protein belongs to the RuvA family. In terms of assembly, homotetramer. Forms an RuvA(8)-RuvB(12)-Holliday junction (HJ) complex. HJ DNA is sandwiched between 2 RuvA tetramers; dsDNA enters through RuvA and exits via RuvB. An RuvB hexamer assembles on each DNA strand where it exits the tetramer. Each RuvB hexamer is contacted by two RuvA subunits (via domain III) on 2 adjacent RuvB subunits; this complex drives branch migration. In the full resolvosome a probable DNA-RuvA(4)-RuvB(12)-RuvC(2) complex forms which resolves the HJ.

It is found in the cytoplasm. In terms of biological role, the RuvA-RuvB-RuvC complex processes Holliday junction (HJ) DNA during genetic recombination and DNA repair, while the RuvA-RuvB complex plays an important role in the rescue of blocked DNA replication forks via replication fork reversal (RFR). RuvA specifically binds to HJ cruciform DNA, conferring on it an open structure. The RuvB hexamer acts as an ATP-dependent pump, pulling dsDNA into and through the RuvAB complex. HJ branch migration allows RuvC to scan DNA until it finds its consensus sequence, where it cleaves and resolves the cruciform DNA. This Neisseria meningitidis serogroup B (strain ATCC BAA-335 / MC58) protein is Holliday junction branch migration complex subunit RuvA.